The sequence spans 101 residues: uncharacterized protein (101 aa).

The chain crosses the membrane as a helical span at residues 77 to 99 (VFSFMNGFTDGCICGTIIILCLI).

Its subcellular location is the membrane. This is an uncharacterized protein from Acanthamoeba polyphaga mimivirus (APMV).